The primary structure comprises 331 residues: Anthranilate phosphoribosyltransferase (331 aa).

5-phospho-alpha-D-ribose 1-diphosphate-binding positions include glycine 78, 81-82, threonine 86, 88-91, 106-114, and serine 118; these read GD, NVST, and KHGNYSVSS. Anthranilate is bound at residue glycine 78. Serine 90 serves as a coordination point for Mg(2+). Asparagine 109 contributes to the anthranilate binding site. Arginine 164 is an anthranilate binding site. Positions 222 and 223 each coordinate Mg(2+).

Belongs to the anthranilate phosphoribosyltransferase family. In terms of assembly, homodimer. Requires Mg(2+) as cofactor.

It catalyses the reaction N-(5-phospho-beta-D-ribosyl)anthranilate + diphosphate = 5-phospho-alpha-D-ribose 1-diphosphate + anthranilate. Its pathway is amino-acid biosynthesis; L-tryptophan biosynthesis; L-tryptophan from chorismate: step 2/5. Its function is as follows. Catalyzes the transfer of the phosphoribosyl group of 5-phosphorylribose-1-pyrophosphate (PRPP) to anthranilate to yield N-(5'-phosphoribosyl)-anthranilate (PRA). The polypeptide is Anthranilate phosphoribosyltransferase (Haloferax volcanii (strain ATCC 29605 / DSM 3757 / JCM 8879 / NBRC 14742 / NCIMB 2012 / VKM B-1768 / DS2) (Halobacterium volcanii)).